The chain runs to 424 residues: Subtilisin-like protease 2 (424 aa).

An N-terminal signal peptide occupies residues 1-17 (MQLLNLGLLLLLPFVAG). Positions 18 to 123 (EIAPQPEPLR…VHPDQHVYLA (106 aa)) are excised as a propeptide. Residues 37-123 (QYIVTLKEGL…VHPDQHVYLA (87 aa)) enclose the Inhibitor I9 domain. The 293-residue stretch at 132–424 (RWGLGYMSSK…RKFTLPKNTK (293 aa)) folds into the Peptidase S8 domain. Catalysis depends on charge relay system residues aspartate 170 and histidine 202. N-linked (GlcNAc...) asparagine glycosylation is found at asparagine 249, asparagine 262, and asparagine 350. Catalysis depends on serine 359, which acts as the Charge relay system. A glycan (N-linked (GlcNAc...) asparagine) is linked at asparagine 390.

This sequence belongs to the peptidase S8 family.

It localises to the secreted. Functionally, secreted subtilisin-like serine protease with keratinolytic activity that contributes to pathogenicity. In Arthroderma otae (Microsporum canis), this protein is Subtilisin-like protease 2 (SUB2).